Here is a 380-residue protein sequence, read N- to C-terminus: Cytochrome b (380 aa).

The next 4 membrane-spanning stretches (helical) occupy residues 34–54 (FGSLLGICLVTQIITGLLLAA), 78–99 (WLIRNLHANGASLFFICIYLHI), 114–134 (WNIGVILLLTLMATAFVGYVL), and 179–199 (FFALHFLLPFVIAGLTLVHLT). Residues histidine 84 and histidine 98 each coordinate heme b. Heme b is bound by residues histidine 183 and histidine 197. An a ubiquinone-binding site is contributed by histidine 202. 4 consecutive transmembrane segments (helical) span residues 227–247 (IKDILGFALMLISLATLALFS), 289–309 (LGGVLALAASVLILFLIPLLH), 321–341 (LSQILFWILVTDLLILTWVGS), and 348–368 (FIIIGQLASFSYFMIILVLFP).

The protein belongs to the cytochrome b family. The cytochrome bc1 complex contains 11 subunits: 3 respiratory subunits (MT-CYB, CYC1 and UQCRFS1), 2 core proteins (UQCRC1 and UQCRC2) and 6 low-molecular weight proteins (UQCRH/QCR6, UQCRB/QCR7, UQCRQ/QCR8, UQCR10/QCR9, UQCR11/QCR10 and a cleavage product of UQCRFS1). This cytochrome bc1 complex then forms a dimer. Requires heme b as cofactor.

The protein localises to the mitochondrion inner membrane. Its function is as follows. Component of the ubiquinol-cytochrome c reductase complex (complex III or cytochrome b-c1 complex) that is part of the mitochondrial respiratory chain. The b-c1 complex mediates electron transfer from ubiquinol to cytochrome c. Contributes to the generation of a proton gradient across the mitochondrial membrane that is then used for ATP synthesis. The protein is Cytochrome b (MT-CYB) of Paradisaea rubra (Red bird of paradise).